A 123-amino-acid polypeptide reads, in one-letter code: MAFDKDAFLTALDSMTVMELNDLVKAIEEKFGVSAAAMSAPAAGGAVAAVAEEKTEFNVVLLEAGAAKVSVIKAVREITGLGLKEAKDMVDGAPKNVKEGVSKVDAEAALKKLLDAGAKAELK.

The protein belongs to the bacterial ribosomal protein bL12 family. As to quaternary structure, homodimer. Part of the ribosomal stalk of the 50S ribosomal subunit. Forms a multimeric L10(L12)X complex, where L10 forms an elongated spine to which 2 to 4 L12 dimers bind in a sequential fashion. Binds GTP-bound translation factors.

Its function is as follows. Forms part of the ribosomal stalk which helps the ribosome interact with GTP-bound translation factors. Is thus essential for accurate translation. The chain is Large ribosomal subunit protein bL12 from Albidiferax ferrireducens (strain ATCC BAA-621 / DSM 15236 / T118) (Rhodoferax ferrireducens).